We begin with the raw amino-acid sequence, 965 residues long: UvrABC system protein A (965 aa).

Glycine 32–serine 39 is an ATP binding site. The segment at cysteine 254–cysteine 281 adopts a C4-type zinc-finger fold. ABC transporter domains follow at residues tryptophan 311 to leucine 588 and proline 608 to alanine 937. Position 641–648 (glycine 641–serine 648) interacts with ATP. The C4-type zinc-finger motif lies at cysteine 740–cysteine 766.

This sequence belongs to the ABC transporter superfamily. UvrA family. As to quaternary structure, forms a heterotetramer with UvrB during the search for lesions.

It is found in the cytoplasm. In terms of biological role, the UvrABC repair system catalyzes the recognition and processing of DNA lesions. UvrA is an ATPase and a DNA-binding protein. A damage recognition complex composed of 2 UvrA and 2 UvrB subunits scans DNA for abnormalities. When the presence of a lesion has been verified by UvrB, the UvrA molecules dissociate. The protein is UvrABC system protein A of Xylella fastidiosa (strain 9a5c).